A 431-amino-acid chain; its full sequence is Enolase (431 aa).

Gln167 is a (2R)-2-phosphoglycerate binding site. Catalysis depends on Glu209, which acts as the Proton donor. Mg(2+)-binding residues include Asp246, Glu289, and Asp316. 4 residues coordinate (2R)-2-phosphoglycerate: Lys341, Arg370, Ser371, and Lys392. The active-site Proton acceptor is Lys341.

Belongs to the enolase family. In terms of assembly, component of the RNA degradosome, a multiprotein complex involved in RNA processing and mRNA degradation. Mg(2+) is required as a cofactor.

The protein resides in the cytoplasm. The protein localises to the secreted. It localises to the cell surface. It catalyses the reaction (2R)-2-phosphoglycerate = phosphoenolpyruvate + H2O. Its pathway is carbohydrate degradation; glycolysis; pyruvate from D-glyceraldehyde 3-phosphate: step 4/5. Catalyzes the reversible conversion of 2-phosphoglycerate (2-PG) into phosphoenolpyruvate (PEP). It is essential for the degradation of carbohydrates via glycolysis. In Shewanella sediminis (strain HAW-EB3), this protein is Enolase.